A 578-amino-acid chain; its full sequence is SUMOylated effector protein AmpA (578 aa).

A disordered region spans residues 144-169 (PQTVDPSVVESATGSGVDTQEEQEID). 3 consecutive repeat copies span residues 180 to 272 (TEEQ…SVEA), 304 to 425 (KEET…VSVE), and 428 to 557 (TEEP…MQQE). Residues 180-557 (TEEQEVILEE…VEADAGMQQE (378 aa)) are 3 X approximate tandem repeats. Positions 516 to 578 (VSVEADAGMQ…DPDDEDVLSY (63 aa)) are disordered.

Post-translationally, polysumoylated during infection on at least two lysine residues, in the N- and C-terminal section. SUMO2/3 modification of AmpA throughout the infection cycle is likely critical for bacterial intracellular survival, while terminal SUMO1 conjugation of AmpA may promote a late-stage infection cycle event. Only a small portion of the available AmpA pool is actually SUMOylated at any given time.

Its subcellular location is the secreted. It localises to the host membrane. The protein resides in the host cytoplasm. The protein localises to the host cytosol. Functionally, secreted effector that hijacks host cell SUMOylation during A.phagocytophilum infection and is important for the pathogen's intracellular survival. The chain is SUMOylated effector protein AmpA from Anaplasma phagocytophilum (strain HZ).